We begin with the raw amino-acid sequence, 157 residues long: Ciliary microtubule inner protein 5 (157 aa).

Disordered regions lie at residues 1–57 (MGSR…SALG) and 92–124 (DPMGNKKEPVKLPDHVPRFSDTVPNSTNRAVGS). Residues 92-109 (DPMGNKKEPVKLPDHVPR) show a composition bias toward basic and acidic residues.

It localises to the cell projection. Its subcellular location is the cilium. In Bos taurus (Bovine), this protein is Ciliary microtubule inner protein 5 (CIMIP5).